A 103-amino-acid chain; its full sequence is Large ribosomal subunit protein bL21 (103 aa).

The protein belongs to the bacterial ribosomal protein bL21 family. As to quaternary structure, part of the 50S ribosomal subunit. Contacts protein L20.

Functionally, this protein binds to 23S rRNA in the presence of protein L20. This chain is Large ribosomal subunit protein bL21, found in Lactobacillus acidophilus (strain ATCC 700396 / NCK56 / N2 / NCFM).